A 476-amino-acid polypeptide reads, in one-letter code: Riboflavin transporter rft-2 (476 aa).

Residues 1–21 (MGCSAATFILVALFGSSSWMG) traverse the membrane as a helical segment. Over 22–41 (TNSVWMQLPLLTSELPEQWN) the chain is Cytoplasmic. A helical membrane pass occupies residues 42 to 62 (LPSYLAGVVQIACIVPLIYTI). Residues 63 to 75 (LHKGVKSFTIPTA) lie on the Extracellular side of the membrane. The chain crosses the membrane as a helical span at residues 76–96 (PLIIALLSLACCCQLGLSFFW). Topologically, residues 97–113 (SDYSEIFGAPRSWPLYS) are cytoplasmic. The helical transmembrane segment at 114–134 (LLFGLAIVNAMSNVLFMPFMA) threads the bilayer. Over 135 to 140 (QFHPAY) the chain is Extracellular. A helical membrane pass occupies residues 141–161 (LNAYFVGMGLSSLAPSLLSLA). Over 162–185 (QGTSMFKCDEKGVAERFPPNFSVS) the chain is Cytoplasmic. Residues 186–206 (IFFFVIFSFTCVALFAFIALY) form a helical membrane-spanning segment. Residues 207–306 (RSGAHTHFAT…HPVDYITGVK (100 aa)) lie on the Extracellular side of the membrane. A disordered region spans residues 215-249 (ATPNKKEPNEGTPLKKDLNNTSSSRKGDDEDESPI). Positions 218-232 (NKKEPNEGTPLKKDL) are enriched in basic and acidic residues. Asn-233 carries N-linked (GlcNAc...) asparagine glycosylation. A helical transmembrane segment spans residues 307–327 (FTFLLFTTALVNAQMNGIITS). The Cytoplasmic segment spans residues 328 to 342 (VQSYAALPYSQATYH). The chain crosses the membrane as a helical span at residues 343–363 (FAVTLSNVVSPLSSFLPFFIS). The Extracellular segment spans residues 364–366 (VRS). A helical transmembrane segment spans residues 367–387 (IPVLAILTACSTAMTAFIVYL). Topologically, residues 388–393 (AALSPN) are cytoplasmic. A helical transmembrane segment spans residues 394–414 (LIFNSVTIGSALSIGGSLIAA). At 415–437 (GLHSYLRVVFASLLREGHQSESR) the chain is on the extracellular side. A helical membrane pass occupies residues 438-458 (LFWCGVFIQIGSFIGSAVMFP). Topologically, residues 459–476 (LVNIAHLFTSAPQCKSIS) are cytoplasmic.

It belongs to the riboflavin transporter family. Expressed in intestine and pharynx.

It localises to the cell membrane. The enzyme catalyses riboflavin(in) = riboflavin(out). Its function is as follows. Riboflavin transporter. The sequence is that of Riboflavin transporter rft-2 from Caenorhabditis elegans.